We begin with the raw amino-acid sequence, 768 residues long: cGMP-dependent protein kinase, isozyme 1 (768 aa).

Residues 1-192 (MAAGMLTDRE…NDFLKNIDAS (192 aa)) form a regulatory region. Low complexity predominate over residues 114–127 (PLASTSSASPSGRT). Residues 114-134 (PLASTSSASPSGRTSADEVRP) are disordered. 3',5'-cyclic GMP contacts are provided by residues 249 to 252 (GELA), 259 to 260 (RT), Arg-366, 375 to 378 (GEQA), 385 to 386 (RT), and Tyr-421. The 261-residue stretch at 457 to 717 (LEVVSTLGIG…IQDIKKHKWF (261 aa)) folds into the Protein kinase domain. ATP contacts are provided by residues 463–471 (LGIGGFGRV) and Lys-488. The active-site Proton acceptor is the Asp-582. The AGC-kinase C-terminal domain maps to 718-768 (LGFDWDGLASQLLIPPFVRPIAHPTDVRYFDRFPCDLNEPPDELSGWDADF).

This sequence belongs to the protein kinase superfamily. AGC Ser/Thr protein kinase family. cGMP subfamily. As to quaternary structure, homodimer. Mg(2+) is required as a cofactor. Autophosphorylated. In embryo stage 13, expression is seen in a few large, irregular cells having the appearance of hemocytes or macrophages. In adults, expression is seen in optic lamina and weakly in testis.

The catalysed reaction is L-seryl-[protein] + ATP = O-phospho-L-seryl-[protein] + ADP + H(+). It catalyses the reaction L-threonyl-[protein] + ATP = O-phospho-L-threonyl-[protein] + ADP + H(+). Its activity is regulated as follows. Binding of cGMP results in enzyme activation. This chain is cGMP-dependent protein kinase, isozyme 1 (Pkg21D), found in Drosophila melanogaster (Fruit fly).